The following is a 188-amino-acid chain: Aspartic protease inhibitor 11 (188 aa).

Residue N19 is glycosylated (N-linked (GlcNAc...) asparagine). 3 cysteine pairs are disulfide-bonded: C48–C93, C142–C159, and C150–C153.

It belongs to the protease inhibitor I3 (leguminous Kunitz-type inhibitor) family.

It is found in the vacuole. Inhibitor of cathepsin D (aspartic protease) and trypsin (serine protease). May protect the plant by inhibiting proteases of invading organisms. This is Aspartic protease inhibitor 11 from Solanum tuberosum (Potato).